Reading from the N-terminus, the 497-residue chain is G protein-coupled receptor gprM (497 aa).

An N-linked (GlcNAc...) asparagine glycan is attached at N3. Transmembrane regions (helical) follow at residues 66–86 (ISVAILPLCIFLLVSYAVLPV), 98–118 (FTLGICFMEASKIAFIIPLGV), 138–158 (CAFTGSLLLLGGWMVVVWSFL), 179–199 (WGALIFGWVVPAVGLTVMLIL), and 221–241 (YWIPIISFAVAALILQLATMA). N-linked (GlcNAc...) asparagine glycosylation occurs at N259. A run of 2 helical transmembrane segments spans residues 293-313 (VTLVLIIIANVIFFSVTFIEL) and 357-377 (LLLAVLVLLSLVGFWNFILFA). N421 carries N-linked (GlcNAc...) asparagine glycosylation. The interval 428 to 497 (YKSPSPMVRS…APAVYREYDD (70 aa)) is disordered.

It belongs to the G-protein coupled receptor GPR1/git3 family. As to quaternary structure, interacts with gpaA.

The protein localises to the cell membrane. G protein-coupled receptor that plays a role in conidiation and regulation of the biosynthesis of secondary metabolites such as dihydroxynaphthalene (DHN)-melanin, via interaction with the G-protein complex alpha subunit gpaA. This chain is G protein-coupled receptor gprM, found in Aspergillus fumigatus (strain CBS 144.89 / FGSC A1163 / CEA10) (Neosartorya fumigata).